Here is a 146-residue protein sequence, read N- to C-terminus: SecB-like chaperone SmegB (146 aa).

It belongs to the SecB-like family.

Chaperone component of an orphan antitoxin chaperone (AC) system; there is no toxin gene in close genomic proximity. When expressed in E.coli complements the cold-sensitive phenotype of a secB deletion, suggesting it may have a generic chaperone function. Does not however complement the toxin-neutralizing effect of its M.tuberculosis paralog Rv1957 (AC P95257) in E.coli, probably because the antitoxin genes are not from the same family. This is SecB-like chaperone SmegB from Mycolicibacterium smegmatis (strain ATCC 700084 / mc(2)155) (Mycobacterium smegmatis).